A 100-amino-acid polypeptide reads, in one-letter code: Small ribosomal subunit protein uS14c (100 aa).

Belongs to the universal ribosomal protein uS14 family. As to quaternary structure, part of the 30S ribosomal subunit.

Its subcellular location is the plastid. The protein resides in the chloroplast. Binds 16S rRNA, required for the assembly of 30S particles. The protein is Small ribosomal subunit protein uS14c of Pisum sativum (Garden pea).